The following is a 422-amino-acid chain: Phagosome assembly factor 1 (422 aa).

It belongs to the PHAF1 family. As to quaternary structure, interacts with BCAS3; the interaction is requrired for the association with the phagophore.

Its subcellular location is the cytoplasm. The protein localises to the preautophagosomal structure. Plays a regulatory role in autophagic activity. In complex with BCAS3, associates with the autophagosome formation site during both non-selective and selective autophagy. This Homo sapiens (Human) protein is Phagosome assembly factor 1.